Consider the following 159-residue polypeptide: Small ribosomal subunit protein uS7 (159 aa).

Belongs to the universal ribosomal protein uS7 family. Part of the 30S ribosomal subunit. Contacts proteins S9 and S11.

In terms of biological role, one of the primary rRNA binding proteins, it binds directly to 16S rRNA where it nucleates assembly of the head domain of the 30S subunit. Is located at the subunit interface close to the decoding center, probably blocks exit of the E-site tRNA. The polypeptide is Small ribosomal subunit protein uS7 (Wolbachia sp. subsp. Brugia malayi (strain TRS)).